Reading from the N-terminus, the 631-residue chain is Phosphomethylpyrimidine synthase (631 aa).

Residues asparagine 239, methionine 268, tyrosine 297, histidine 333, 353-355 (SRG), 394-397 (DGLR), and glutamate 433 each bind substrate. Histidine 437 contributes to the Zn(2+) binding site. Position 460 (tyrosine 460) interacts with substrate. Zn(2+) is bound at residue histidine 501. Residues cysteine 581, cysteine 584, and cysteine 589 each coordinate [4Fe-4S] cluster.

It belongs to the ThiC family. Homodimer. Requires [4Fe-4S] cluster as cofactor.

It carries out the reaction 5-amino-1-(5-phospho-beta-D-ribosyl)imidazole + S-adenosyl-L-methionine = 4-amino-2-methyl-5-(phosphooxymethyl)pyrimidine + CO + 5'-deoxyadenosine + formate + L-methionine + 3 H(+). It participates in cofactor biosynthesis; thiamine diphosphate biosynthesis. In terms of biological role, catalyzes the synthesis of the hydroxymethylpyrimidine phosphate (HMP-P) moiety of thiamine from aminoimidazole ribotide (AIR) in a radical S-adenosyl-L-methionine (SAM)-dependent reaction. This Shigella dysenteriae serotype 1 (strain Sd197) protein is Phosphomethylpyrimidine synthase.